The sequence spans 52 residues: Rubredoxin (52 aa).

The region spanning 1–52 (MEKWQCTVCGYIYDPEVGDPTQNIPPGTKFEDLPDDWVCPDCGVGKDQFEKI) is the Rubredoxin-like domain. Cysteine 6, cysteine 9, cysteine 39, and cysteine 42 together coordinate Fe cation.

It belongs to the rubredoxin family. Fe(3+) serves as cofactor.

Functionally, rubredoxin is a small nonheme, iron protein lacking acid-labile sulfide. Its single Fe, chelated to 4 Cys, functions as an electron acceptor and may also stabilize the conformation of the molecule. The polypeptide is Rubredoxin (Thermoanaerobacterium thermosaccharolyticum (strain ATCC 7956 / DSM 571 / NCIMB 9385 / NCA 3814 / NCTC 13789 / WDCM 00135 / 2032) (Clostridium thermosaccharolyticum)).